The sequence spans 371 residues: Poly(rC)-binding protein 3 (371 aa).

KH domains are found at residues 45–95 (TLTI…TITG), 129–182 (PVTL…TISG), and 293–357 (ASTH…QYLI).

The protein resides in the cytoplasm. Single-stranded nucleic acid binding protein that binds preferentially to oligo dC. The chain is Poly(rC)-binding protein 3 from Homo sapiens (Human).